A 954-amino-acid polypeptide reads, in one-letter code: Bifunctional glutamine synthetase adenylyltransferase/adenylyl-removing enzyme (954 aa).

Residues 1 to 450 are adenylyl removase; it reads MENISNKPLS…HFIETVGGRT (450 aa). The tract at residues 454–954 is adenylyl transferase; the sequence is GADLWTQQLW…MDIYQRILVD (501 aa).

The protein belongs to the GlnE family. The cofactor is Mg(2+).

It catalyses the reaction [glutamine synthetase]-O(4)-(5'-adenylyl)-L-tyrosine + phosphate = [glutamine synthetase]-L-tyrosine + ADP. The catalysed reaction is [glutamine synthetase]-L-tyrosine + ATP = [glutamine synthetase]-O(4)-(5'-adenylyl)-L-tyrosine + diphosphate. Its function is as follows. Involved in the regulation of glutamine synthetase GlnA, a key enzyme in the process to assimilate ammonia. When cellular nitrogen levels are high, the C-terminal adenylyl transferase (AT) inactivates GlnA by covalent transfer of an adenylyl group from ATP to specific tyrosine residue of GlnA, thus reducing its activity. Conversely, when nitrogen levels are low, the N-terminal adenylyl removase (AR) activates GlnA by removing the adenylyl group by phosphorolysis, increasing its activity. The regulatory region of GlnE binds the signal transduction protein PII (GlnB) which indicates the nitrogen status of the cell. This is Bifunctional glutamine synthetase adenylyltransferase/adenylyl-removing enzyme from Shewanella woodyi (strain ATCC 51908 / MS32).